The primary structure comprises 286 residues: Putative 2-aminoethylphosphonate transport system permease protein PhnU (286 aa).

Transmembrane regions (helical) follow at residues 19–39 (WLLL…SLIV), 76–96 (FFAT…LVFI), 111–131 (FIAL…GSAG), 150–170 (FLYS…PLVM), 202–222 (VIFP…LLLT), and 254–274 (YTVA…LFSL). One can recognise an ABC transmembrane type-1 domain in the interval 68 to 275 (LLNTLQIAFF…VLSLGLFSLY (208 aa)).

Belongs to the binding-protein-dependent transport system permease family.

It is found in the cell inner membrane. Functionally, probably part of the PhnSTUV complex (TC 3.A.1.11.5) involved in 2-aminoethylphosphonate import. Probably responsible for the translocation of the substrate across the membrane. This Salmonella choleraesuis (strain SC-B67) protein is Putative 2-aminoethylphosphonate transport system permease protein PhnU (phnU).